Consider the following 388-residue polypeptide: Na(+)/H(+) antiporter NhaA (388 aa).

A run of 11 helical transmembrane segments spans residues 14–34, 59–79, 95–115, 125–145, 154–174, 179–199, 219–239, 254–274, 292–312, 328–348, and 360–380; these read GGIILIIAAALAMLMANMGAT, MLLWINDALMAVFFLLIGLEV, AFPVIAAIGGMIVPALLYLAF, GWAIPAATDIAFALGVLALLG, IFLMALAIIDDLGAIVIIALF, LSIVSLGVAAFAIAVLALLNL, VLKSGVHATLAGVIVGFFIPL, VLHPWVAYLILPLFAFANAGV, IIAGLLIGKPLGISLFCWLAL, IMAVGILCGIGFTMSIFIASL, and WAKLGILIGSLLSAVVGYSWL.

Belongs to the NhaA Na(+)/H(+) (TC 2.A.33) antiporter family.

The protein localises to the cell inner membrane. It catalyses the reaction Na(+)(in) + 2 H(+)(out) = Na(+)(out) + 2 H(+)(in). Na(+)/H(+) antiporter that extrudes sodium in exchange for external protons. The chain is Na(+)/H(+) antiporter NhaA from Salmonella choleraesuis (strain SC-B67).